Consider the following 293-residue polypeptide: Lipoyl synthase (293 aa).

Residues C47, C52, C58, C73, C77, C80, and S285 each contribute to the [4Fe-4S] cluster site. Residues 59–274 (WSEGTATFMI…EKIGLELGFR (216 aa)) form the Radical SAM core domain.

The protein belongs to the radical SAM superfamily. Lipoyl synthase family. [4Fe-4S] cluster is required as a cofactor.

Its subcellular location is the cytoplasm. It carries out the reaction [[Fe-S] cluster scaffold protein carrying a second [4Fe-4S](2+) cluster] + N(6)-octanoyl-L-lysyl-[protein] + 2 oxidized [2Fe-2S]-[ferredoxin] + 2 S-adenosyl-L-methionine + 4 H(+) = [[Fe-S] cluster scaffold protein] + N(6)-[(R)-dihydrolipoyl]-L-lysyl-[protein] + 4 Fe(3+) + 2 hydrogen sulfide + 2 5'-deoxyadenosine + 2 L-methionine + 2 reduced [2Fe-2S]-[ferredoxin]. It functions in the pathway protein modification; protein lipoylation via endogenous pathway; protein N(6)-(lipoyl)lysine from octanoyl-[acyl-carrier-protein]: step 2/2. Catalyzes the radical-mediated insertion of two sulfur atoms into the C-6 and C-8 positions of the octanoyl moiety bound to the lipoyl domains of lipoate-dependent enzymes, thereby converting the octanoylated domains into lipoylated derivatives. The protein is Lipoyl synthase of Christiangramia forsetii (strain DSM 17595 / CGMCC 1.15422 / KT0803) (Gramella forsetii).